Reading from the N-terminus, the 311-residue chain is Malate dehydrogenase (311 aa).

NAD(+) contacts are provided by residues 7 to 13 (GAAGGIG) and aspartate 34. Substrate-binding residues include arginine 81 and arginine 87. NAD(+) is bound by residues asparagine 94 and 117-119 (ITN). Residues asparagine 119 and arginine 153 each contribute to the substrate site. Histidine 177 (proton acceptor) is an active-site residue. Methionine 227 lines the NAD(+) pocket.

Belongs to the LDH/MDH superfamily. MDH type 1 family. In terms of assembly, homodimer.

It catalyses the reaction (S)-malate + NAD(+) = oxaloacetate + NADH + H(+). Catalyzes the reversible oxidation of malate to oxaloacetate. This is Malate dehydrogenase from Shewanella amazonensis (strain ATCC BAA-1098 / SB2B).